We begin with the raw amino-acid sequence, 357 residues long: Alanine racemase (357 aa).

K35 acts as the Proton acceptor; specific for D-alanine in catalysis. K35 is subject to N6-(pyridoxal phosphate)lysine. R128 contacts substrate. Catalysis depends on Y254, which acts as the Proton acceptor; specific for L-alanine. M302 contributes to the substrate binding site.

Belongs to the alanine racemase family. Pyridoxal 5'-phosphate is required as a cofactor.

The enzyme catalyses L-alanine = D-alanine. Its pathway is amino-acid biosynthesis; D-alanine biosynthesis; D-alanine from L-alanine: step 1/1. Catalyzes the interconversion of L-alanine and D-alanine. May also act on other amino acids. This Marinobacter nauticus (strain ATCC 700491 / DSM 11845 / VT8) (Marinobacter aquaeolei) protein is Alanine racemase (alr).